Here is a 95-residue protein sequence, read N- to C-terminus: Costars family protein WS02710_H03 (95 aa).

It belongs to the costars family.

In Picea sitchensis (Sitka spruce), this protein is Costars family protein WS02710_H03.